The sequence spans 833 residues: Translation initiation factor IF-2 (833 aa).

In terms of domain architecture, tr-type G spans 331–501 (TRAPVVTVMG…LLIAEMQDLK (171 aa)). Residues 340 to 347 (GHVDHGKT) form a G1 region. 340–347 (GHVDHGKT) provides a ligand contact to GTP. The tract at residues 365-369 (GITQH) is G2. The segment at 387–390 (DTPG) is G3. Residues 387 to 391 (DTPGH) and 441 to 444 (NKID) each bind GTP. The interval 441–444 (NKID) is G4. Residues 477–479 (SAL) are G5.

Belongs to the TRAFAC class translation factor GTPase superfamily. Classic translation factor GTPase family. IF-2 subfamily.

It is found in the cytoplasm. Functionally, one of the essential components for the initiation of protein synthesis. Protects formylmethionyl-tRNA from spontaneous hydrolysis and promotes its binding to the 30S ribosomal subunits. Also involved in the hydrolysis of GTP during the formation of the 70S ribosomal complex. In Rickettsia canadensis (strain McKiel), this protein is Translation initiation factor IF-2.